The following is a 250-amino-acid chain: MEHSSASVPAALPYYVAFSQLLGLTVVAVTGAWLGLYRGGIAWESSLQFNVHPLCMVIGMIFLQGDALLVYRVFRREAKRTTKILHGLLHVFAFIIALVGLVAVFDYHKKKGYADLYSLHSWCGILVFVLYFVQWLVGFSFFLFPGASFSLRSRYRPQHIFFGATIFLFSVGTALLGLKEALLFKLGSKYSTFEPEGVLANVLGLLLVCFGVVVLYILAQADWKRPSQAEEQALSMDFKTLTEGDSPSPQ.

An N-acetylmethionine modification is found at Met-1. Residues 1 to 15 (MEHSSASVPAALPYY) lie on the Cytoplasmic side of the membrane. Residues 16–36 (VAFSQLLGLTVVAVTGAWLGL) traverse the membrane as a helical segment. In terms of domain architecture, Cytochrome b561 spans 18–219 (FSQLLGLTVV…FGVVVLYILA (202 aa)). Over 37-50 (YRGGIAWESSLQFN) the chain is Vesicular. Residues 51–71 (VHPLCMVIGMIFLQGDALLVY) traverse the membrane as a helical segment. Heme b-binding residues include His-52, Arg-72, and Lys-79. Residues 72 to 83 (RVFRREAKRTTK) are Cytoplasmic-facing. Lys-79 and Lys-83 together coordinate L-ascorbate. The helical transmembrane segment at 84 to 104 (ILHGLLHVFAFIIALVGLVAV) threads the bilayer. Heme b is bound by residues His-86, 115–118 (DLYS), and His-120. Residues 105–123 (FDYHKKKGYADLYSLHSWC) lie on the Vesicular side of the membrane. Residues 124–144 (GILVFVLYFVQWLVGFSFFLF) form a helical membrane-spanning segment. The Cytoplasmic portion of the chain corresponds to 145 to 157 (PGASFSLRSRYRP). Residue Arg-152 coordinates L-ascorbate. The helical transmembrane segment at 158–178 (QHIFFGATIFLFSVGTALLGL) threads the bilayer. Residues His-159 and Glu-180 each contribute to the heme b site. The Vesicular segment spans residues 179–197 (KEALLFKLGSKYSTFEPEG). A helical membrane pass occupies residues 198–218 (VLANVLGLLLVCFGVVVLYIL). Topologically, residues 219-250 (AQADWKRPSQAEEQALSMDFKTLTEGDSPSPQ) are cytoplasmic. Lys-224 is a binding site for heme b. Residues Ser-246 and Ser-248 each carry the phosphoserine modification.

It depends on heme b as a cofactor. Abundantly distributed in a number of neuroendocrine tissues.

Its subcellular location is the cytoplasmic vesicle. The protein resides in the secretory vesicle. The protein localises to the chromaffin granule membrane. It carries out the reaction monodehydro-L-ascorbate radical(out) + L-ascorbate(in) = monodehydro-L-ascorbate radical(in) + L-ascorbate(out). Its function is as follows. Transmembrane reductase that uses ascorbate as an electron donor in the cytoplasm and transfers electrons across membranes to reduce monodehydro-L-ascorbate radical in the lumen of secretory vesicles. It is therefore involved the regeneration and homeostasis within secretory vesicles of ascorbate which in turn provides reducing equivalents needed to support the activity of intravesicular enzymes. In Mus musculus (Mouse), this protein is Transmembrane ascorbate-dependent reductase CYB561.